A 159-amino-acid polypeptide reads, in one-letter code: Transcriptional repressor NrdR (159 aa).

The segment at 1–21 (MRCPKCQHNKSNVIDSRQAED) is disordered. A zinc finger lies at 3-34 (CPKCQHNKSNVIDSRQAEDGNTIRRRRECDAC). The ATP-cone domain occupies 49–139 (LLVVKKDGTR…VYRSFKDVDE (91 aa)).

Belongs to the NrdR family. It depends on Zn(2+) as a cofactor.

Negatively regulates transcription of bacterial ribonucleotide reductase nrd genes and operons by binding to NrdR-boxes. In Streptococcus thermophilus (strain ATCC BAA-491 / LMD-9), this protein is Transcriptional repressor NrdR.